Consider the following 484-residue polypeptide: Putative amidase AmiA2 (484 aa).

Catalysis depends on charge relay system residues Lys93 and Ser167. Ser191 (acyl-ester intermediate) is an active-site residue.

Belongs to the amidase family.

It catalyses the reaction a monocarboxylic acid amide + H2O = a monocarboxylate + NH4(+). The protein is Putative amidase AmiA2 (amiA2) of Mycobacterium bovis (strain ATCC BAA-935 / AF2122/97).